A 141-amino-acid chain; its full sequence is Large ribosomal subunit protein uL16 (141 aa).

Belongs to the universal ribosomal protein uL16 family. Part of the 50S ribosomal subunit.

Binds 23S rRNA and is also seen to make contacts with the A and possibly P site tRNAs. The chain is Large ribosomal subunit protein uL16 from Geobacillus kaustophilus (strain HTA426).